The primary structure comprises 486 residues: NADH dehydrogenase [ubiquinone] flavoprotein 1, mitochondrial (486 aa).

The transit peptide at 1 to 30 (MAPVRGILGLQRAVSIWKESNRLTPALRSF) directs the protein to the mitochondrion. Residues 31-40 (STQAASTSTT) show a composition bias toward low complexity. The tract at residues 31-57 (STQAASTSTTPQPPPPPPPPEKTHFGG) is disordered. The span at 41–50 (PQPPPPPPPP) shows a compositional bias: pro residues. Residue 110-119 (GRGGAGFPSG) coordinates NADH. 222-270 (FGAGAYICGEETALLESLEGKQGKPRLKPPFPANAGLYGCPTTVTNVET) is an FMN binding site. [4Fe-4S] cluster is bound by residues C402, C405, C408, and C448.

Belongs to the complex I 51 kDa subunit family. Complex I is composed of at least 49 different subunits. This is a component of the flavoprotein-sulfur (FP) fragment of the enzyme. Requires FMN as cofactor. The cofactor is [4Fe-4S] cluster.

It is found in the mitochondrion inner membrane. The enzyme catalyses a ubiquinone + NADH + 5 H(+)(in) = a ubiquinol + NAD(+) + 4 H(+)(out). Its function is as follows. Core subunit of the mitochondrial membrane respiratory chain NADH dehydrogenase (Complex I) that is believed to belong to the minimal assembly required for catalysis. Complex I functions in the transfer of electrons from NADH to the respiratory chain. The immediate electron acceptor for the enzyme is believed to be ubiquinone. The chain is NADH dehydrogenase [ubiquinone] flavoprotein 1, mitochondrial from Arabidopsis thaliana (Mouse-ear cress).